Consider the following 523-residue polypeptide: Inosine-5'-monophosphate dehydrogenase 2 (523 aa).

2 CBS domains span residues 121 to 183 (FINN…VQDV) and 184 to 240 (MTKN…PLAS). NAD(+) is bound by residues 278–280 (DSS) and 328–330 (GMG). K(+)-binding residues include Gly330 and Gly332. Ser333 lines the IMP pocket. Cys335 contacts K(+). Residue Cys335 is the Thioimidate intermediate of the active site. IMP-binding positions include 368 to 370 (DGG), 391 to 392 (GG), and 415 to 419 (YRGMG). The active-site Proton acceptor is the Arg437. Gln449 contacts IMP. Residues Glu508, Gly509, and Gly510 each contribute to the K(+) site.

Belongs to the IMPDH/GMPR family. Homotetramer. Seems to be able to form heterotetramers composed from more than 1 of the 3 IMPDH gene products (IMD2-4). K(+) is required as a cofactor.

It localises to the cytoplasm. It carries out the reaction IMP + NAD(+) + H2O = XMP + NADH + H(+). The protein operates within purine metabolism; XMP biosynthesis via de novo pathway; XMP from IMP: step 1/1. With respect to regulation, mycophenolic acid (MPA) is a non-competitive inhibitor that prevents formation of the closed enzyme conformation by binding to the same site as the amobile flap. In contrast, mizoribine monophosphate (MZP) is a competitive inhibitor that induces the closed conformation. MPA is a potent inhibitor of mammalian IMPDHs but a poor inhibitor of the bacterial enzymes. MZP is a more potent inhibitor of bacterial IMPDH. Its function is as follows. Catalyzes the conversion of inosine 5'-phosphate (IMP) to xanthosine 5'-phosphate (XMP), the first committed and rate-limiting step in the de novo synthesis of guanine nucleotides, and therefore plays an important role in the regulation of cell growth. In contrast to the other IMPDH alleles IMD3 and IMD4, the enzymatic activity of IMD2 seems to be intrinsically drug resistant. The chain is Inosine-5'-monophosphate dehydrogenase 2 from Saccharomyces cerevisiae (strain ATCC 204508 / S288c) (Baker's yeast).